The chain runs to 812 residues: 5-methyltetrahydropteroyltriglutamate--homocysteine methyltransferase 3, chloroplastic (812 aa).

A chloroplast-targeting transit peptide spans 1-33 (MGQLALQRLQPLASLPRRPPSLPPPSSATPSLP). The segment at 13–33 (ASLPRRPPSLPPPSSATPSLP) is disordered. The span at 17–27 (RRPPSLPPPSS) shows a compositional bias: pro residues. Residues K66 and N164 each contribute to the 5-methyltetrahydropteroyltri-L-glutamate site. The tract at residues 430–456 (MRQASRRSSPRVTNAAVQQDVDAVKKS) is disordered. L-homocysteine contacts are provided by residues 485-487 (IGS) and E538. L-methionine-binding positions include 485 to 487 (IGS) and E538. Residues D543, Y566, 569–570 (RC), and W615 each bind 5-methyltetrahydropteroyltri-L-glutamate. L-homocysteine is bound at residue D653. D653 is a binding site for L-methionine. Residues H695, C697, H706, D710, and E719 each coordinate Zn(2+). The active-site Proton donor is the H749. Position 781 (C781) interacts with Zn(2+).

The protein belongs to the vitamin-B12 independent methionine synthase family. Zn(2+) serves as cofactor. Expressed in seeds.

It localises to the plastid. The protein localises to the chloroplast. It carries out the reaction 5-methyltetrahydropteroyltri-L-glutamate + L-homocysteine = tetrahydropteroyltri-L-glutamate + L-methionine. Its pathway is amino-acid biosynthesis; L-methionine biosynthesis via de novo pathway; L-methionine from L-homocysteine (MetE route): step 1/1. Functionally, catalyzes the transfer of a methyl group from 5-methyltetrahydrofolate to homocysteine resulting in methionine formation. This Arabidopsis thaliana (Mouse-ear cress) protein is 5-methyltetrahydropteroyltriglutamate--homocysteine methyltransferase 3, chloroplastic (MS3).